Reading from the N-terminus, the 391-residue chain is G-patch domain-containing protein 1 (391 aa).

The region spanning 15-61 (KDSAAFKLMKSMGWEEGEGLGKDKQGIKGYVRVTNKQDTSGVGLDKP) is the G-patch domain. Disordered regions lie at residues 80-132 (VQAA…EKGK) and 212-307 (KASE…PAKR). 2 stretches are compositionally biased toward acidic residues: residues 92 to 102 (DDSDKEDESED) and 265 to 295 (NSDD…DDDK). A Nuclear localization signal motif is present at residues 305-312 (AKRKHDEI).

In terms of tissue distribution, strongly expressed in tissues with high cell proliferation activity that have a high demand for ribosome production such as shoot tips, leaves primordia, root tips and floral buds.

The protein localises to the nucleus. It is found in the nucleolus. Its function is as follows. Involved in ribosome biogenesis, required for normal progression of rRNA processing. Seems to promote cell proliferation in leaves. This Arabidopsis thaliana (Mouse-ear cress) protein is G-patch domain-containing protein 1.